Here is a 330-residue protein sequence, read N- to C-terminus: Probable cell division protein WhiA (330 aa).

A DNA-binding region (H-T-H motif) is located at residues serine 275–glutamate 308.

Belongs to the WhiA family.

Its function is as follows. Involved in cell division and chromosome segregation. In Kocuria rhizophila (strain ATCC 9341 / DSM 348 / NBRC 103217 / DC2201), this protein is Probable cell division protein WhiA.